A 61-amino-acid chain; its full sequence is Small ribosomal subunit protein uS14B (61 aa).

Zn(2+)-binding residues include C24, C27, C40, and C43.

The protein belongs to the universal ribosomal protein uS14 family. Zinc-binding uS14 subfamily. In terms of assembly, part of the 30S ribosomal subunit. Contacts proteins S3 and S10. It depends on Zn(2+) as a cofactor.

Functionally, binds 16S rRNA, required for the assembly of 30S particles and may also be responsible for determining the conformation of the 16S rRNA at the A site. This chain is Small ribosomal subunit protein uS14B, found in Myxococcus xanthus (strain DK1622).